Here is a 293-residue protein sequence, read N- to C-terminus: MTTFFQQHFSRNKWLAYAQLMRFDKPIGTLLLLYPTLWALFAAAGGMPPLSVLVIFVLGVIVMRAAGCVINDYADRHIDGEVKRTSQRPLATGRVTTTEAKILFVLLLCIAFVLDLLLNRYTFLLSFVAVALAIIYPFMKRFTHLPQVVLGMAFGWAIPMAYGAVSESLPLECWLLFFANIFWTVAYDTQYAMVDRDDDLRIGVKSTAILFAQYDNKIIALLQFITLVLLVIFGWISQYHWGYFVVLGLSASLFSHQCWLTKQRVREQCFKAFLNNHYFGLGVFFAILVGIYA.

The next 8 membrane-spanning stretches (helical) occupy residues 26–48, 98–118, 122–142, 145–165, 167–187, 218–238, 241–261, and 272–292; these read PIGT…GGMP, TEAK…DLLL, TFLL…MKRF, LPQV…YGAV, ESLP…TVAY, IIAL…WISQ, WGYF…CWLT, and AFLN…VGIY.

The protein belongs to the UbiA prenyltransferase family. It depends on Mg(2+) as a cofactor.

The protein localises to the cell inner membrane. The enzyme catalyses all-trans-octaprenyl diphosphate + 4-hydroxybenzoate = 4-hydroxy-3-(all-trans-octaprenyl)benzoate + diphosphate. It participates in cofactor biosynthesis; ubiquinone biosynthesis. Its function is as follows. Catalyzes the prenylation of para-hydroxybenzoate (PHB) with an all-trans polyprenyl group. Mediates the second step in the final reaction sequence of ubiquinone-8 (UQ-8) biosynthesis, which is the condensation of the polyisoprenoid side chain with PHB, generating the first membrane-bound Q intermediate 3-octaprenyl-4-hydroxybenzoate. The protein is 4-hydroxybenzoate octaprenyltransferase of Actinobacillus pleuropneumoniae serotype 3 (strain JL03).